The sequence spans 742 residues: Polyribonucleotide nucleotidyltransferase (742 aa).

Positions 515 and 521 each coordinate Mg(2+). The KH domain maps to 581 to 640 (PRIITITIPVDKIGEVIGPKGKIINQIQDDTGASISIEDDGTIYIGATNGEAAEAAKNAV). Residues 652 to 724 (GERYLGTVVK…DRGKLSLVPV (73 aa)) form the S1 motif domain.

This sequence belongs to the polyribonucleotide nucleotidyltransferase family. The cofactor is Mg(2+).

The protein resides in the cytoplasm. It carries out the reaction RNA(n+1) + phosphate = RNA(n) + a ribonucleoside 5'-diphosphate. Functionally, involved in mRNA degradation. Catalyzes the phosphorolysis of single-stranded polyribonucleotides processively in the 3'- to 5'-direction. In Nocardioides sp. (strain ATCC BAA-499 / JS614), this protein is Polyribonucleotide nucleotidyltransferase.